The following is an 80-amino-acid chain: Cell division protein ZapB (80 aa).

Residues 3–80 (FEVFEKLESK…ALLGKMEDVQ (78 aa)) are a coiled coil.

The protein belongs to the ZapB family. In terms of assembly, homodimer. The ends of the coiled-coil dimer bind to each other, forming polymers. Interacts with FtsZ.

It is found in the cytoplasm. Functionally, non-essential, abundant cell division factor that is required for proper Z-ring formation. It is recruited early to the divisome by direct interaction with FtsZ, stimulating Z-ring assembly and thereby promoting cell division earlier in the cell cycle. Its recruitment to the Z-ring requires functional FtsA or ZipA. The chain is Cell division protein ZapB from Proteus mirabilis (strain HI4320).